The primary structure comprises 157 residues: uncharacterized protein (157 aa).

Positions 3 to 157 (FTLEDMTEEE…TNIRMRKQLC (155 aa)) constitute an N-acetyltransferase domain.

It belongs to the acetyltransferase family.

This is an uncharacterized protein from Bacillus subtilis (strain 168).